Here is a 546-residue protein sequence, read N- to C-terminus: MNKFKVNISGMTCTGCEKHVESALEKIGAKNIESSYRRGEAVFELPDDIEVESAIKAIDEANYQAGEIEEVSSLENVALINEDNYDLLIIGSGAAAFSSAIKAIEYGAKVGMIERGTVGGTCVNIGCVPSKTLLRAGEIIHLSKDNPFIGLQTSAGEVDLASLITQKDKLVSELRNQKYMDLIDEYNFDLIKGEAKFVDASTVEVNGAKLSAKRFLIATGASPSLPQISGLEKMDYLTSTTLLELKKIPKRLTVIGSGYIGMELGQLFHHLGSEITLMQRSERLLKEYDPEISESVEKALIEQGINLVKGATFERVEQSGEIKRVYVTVNGSREVIESDQLLVATGRKPNTDSLNLSAAGVETGKNNEILINDFGQTSNEKIYAAGDVTLGPQFVYVAAYEGGIITDNAIGGLNKKIDLSVVPAVTFTNPTVATVGLTEEQAKEKGYDVKTSVLPLDAVPRAIVNRETTGVFKLVADAETLKVLGVHIVSENAGDVIYAASLAVKFGLTVEDLTETLAPYLTMAEGLKLAALTFDKDIWKLSCCAG.

In terms of domain architecture, HMA spans 2-66 (NKFKVNISGM…AIDEANYQAG (65 aa)). Residues cysteine 13 and cysteine 16 each coordinate a metal cation. FAD-binding residues include alanine 96, glycine 116, and threonine 121. A disulfide bridge links cysteine 122 with cysteine 127. The FAD site is built by lysine 131 and alanine 195. Residues 256–263 (GSGYIGME) and glycine 346 each bind NAD(+). FAD contacts are provided by aspartate 387 and valine 395. Hg(2+)-binding residues include cysteine 543 and cysteine 544.

This sequence belongs to the class-I pyridine nucleotide-disulfide oxidoreductase family. As to quaternary structure, homodimer. The cofactor is FAD.

The catalysed reaction is Hg + NADP(+) + H(+) = Hg(2+) + NADPH. With respect to regulation, uses NADPH as the preferred electron donor, but shows slight activity with NADH as well. Inhibited by Cu(2+), Cd(2+), Zn(2+) and Co(2+), with Cu(2+) showing the strongest inhibition. Enzyme activity is enhanced by b-mercaptoethanol and NaCl up to concentrations of 500 uM and 100 mM respectively, followed by inhibition at higher concentrations. Functionally, resistance to Hg(2+) in bacteria appears to be governed by a specialized system which includes mercuric reductase. MerA protein is responsible for volatilizing mercury as Hg(0). Catalyzes reduction of Hg(2+) to elemental Hg, which is volatile and can diffuse out of cells passively. Plays a pivotal role in mercury resistance and cell protection. This chain is Mercuric reductase, found in Lysinibacillus sphaericus (Bacillus sphaericus).